The chain runs to 66 residues: Large ribosomal subunit protein bL35 (66 aa).

Belongs to the bacterial ribosomal protein bL35 family.

This chain is Large ribosomal subunit protein bL35, found in Thermodesulfovibrio yellowstonii (strain ATCC 51303 / DSM 11347 / YP87).